Consider the following 120-residue polypeptide: C-C motif chemokine 16 (120 aa).

Positions 1-23 (MKVSEAALSLLVLILIITSASRS) are cleaved as a signal peptide. Cystine bridges form between cysteine 37–cysteine 60 and cysteine 38–cysteine 76.

Belongs to the intercrine beta (chemokine CC) family. As to expression, mainly expressed in liver, also found in spleen and thymus. Highly expressed in LPS- and IFN-gamma-activated monocytes, weakly in some lymphocytes, including natural killer cells, gamma-delta T-cells, and some T-cell clones.

Its subcellular location is the secreted. In terms of biological role, shows chemotactic activity for lymphocytes and monocytes but not neutrophils. Also shows potent myelosuppressive activity, suppresses proliferation of myeloid progenitor cells. Recombinant SCYA16 shows chemotactic activity for monocytes and THP-1 monocytes, but not for resting lymphocytes and neutrophils. Induces a calcium flux in THP-1 cells that were desensitized by prior expression to RANTES. This Homo sapiens (Human) protein is C-C motif chemokine 16 (CCL16).